Consider the following 435-residue polypeptide: Serine--tRNA ligase (435 aa).

241-243 (TAE) lines the L-serine pocket. Position 272–274 (272–274 (RAE)) interacts with ATP. Residue E295 coordinates L-serine. Residue 359-362 (EISS) participates in ATP binding. Residue S395 participates in L-serine binding.

This sequence belongs to the class-II aminoacyl-tRNA synthetase family. Type-1 seryl-tRNA synthetase subfamily. As to quaternary structure, homodimer. The tRNA molecule binds across the dimer.

Its subcellular location is the cytoplasm. It catalyses the reaction tRNA(Ser) + L-serine + ATP = L-seryl-tRNA(Ser) + AMP + diphosphate + H(+). It carries out the reaction tRNA(Sec) + L-serine + ATP = L-seryl-tRNA(Sec) + AMP + diphosphate + H(+). Its pathway is aminoacyl-tRNA biosynthesis; selenocysteinyl-tRNA(Sec) biosynthesis; L-seryl-tRNA(Sec) from L-serine and tRNA(Sec): step 1/1. Its function is as follows. Catalyzes the attachment of serine to tRNA(Ser). Is also able to aminoacylate tRNA(Sec) with serine, to form the misacylated tRNA L-seryl-tRNA(Sec), which will be further converted into selenocysteinyl-tRNA(Sec). The chain is Serine--tRNA ligase from Haemophilus ducreyi (strain 35000HP / ATCC 700724).